Consider the following 186-residue polypeptide: Elongation factor P (186 aa).

N6-(3,6-diaminohexanoyl)-5-hydroxylysine is present on lysine 33.

Belongs to the elongation factor P family. In terms of processing, may be beta-lysylated on the epsilon-amino group of Lys-33 by the combined action of EpmA and EpmB, and then hydroxylated on the C5 position of the same residue by EpmC (if this protein is present). Lysylation is critical for the stimulatory effect of EF-P on peptide-bond formation. The lysylation moiety may extend toward the peptidyltransferase center and stabilize the terminal 3-CCA end of the tRNA. Hydroxylation of the C5 position on Lys-33 may allow additional potential stabilizing hydrogen-bond interactions with the P-tRNA.

It localises to the cytoplasm. It participates in protein biosynthesis; polypeptide chain elongation. Functionally, involved in peptide bond synthesis. Alleviates ribosome stalling that occurs when 3 or more consecutive Pro residues or the sequence PPG is present in a protein, possibly by augmenting the peptidyl transferase activity of the ribosome. Modification of Lys-33 is required for alleviation. This is Elongation factor P from Acidithiobacillus ferrooxidans (strain ATCC 23270 / DSM 14882 / CIP 104768 / NCIMB 8455) (Ferrobacillus ferrooxidans (strain ATCC 23270)).